Here is a 412-residue protein sequence, read N- to C-terminus: Potassium channel, subfamily K, member 13 (412 aa).

Over 1–21 (MACRSGCCCNSIGSFNEDNAR) the chain is Cytoplasmic. Residues 22-42 (FLMLALLIIIYLLCGAAVFSA) form a helical membrane-spanning segment. The segment at residues 97–117 (WDFAGAFYFVGTVVSTIGFGM) is an intramembrane region (pore-forming). Positions 112, 113, and 114 each coordinate K(+). Residues 112–117 (TIGFGM) are selectivity filter 1. Residues 127–147 (IFLIFYGLIGCAATILFFNLF) traverse the membrane as a helical segment. At 148–198 (LERVITVIAFVLKFCHERRESRKAGPTQNCRRPSTDNRDRRTDSLAGWKPS) the chain is on the cytoplasmic side. Residues 199-219 (VYCVMLILGVAAILVSCCASA) traverse the membrane as a helical segment. The pore-forming intramembrane region spans 229–249 (YLDALYFCFVAFSTIGFGDMV). Positions 242, 243, 244, and 245 each coordinate K(+). The segment at 242–247 (TIGFGD) is selectivity filter 2. Residues 268–288 (LFILTGVCCIYSLFNVISIVI) form a helical membrane-spanning segment. At 289 to 412 (KQVLNWLLRR…NRLAETSVDR (124 aa)) the chain is on the cytoplasmic side. The span at 374-386 (MANGHPRQSGSSS) shows a compositional bias: polar residues. Residues 374-395 (MANGHPRQSGSSSRHNEFSGGV) are disordered.

It belongs to the two pore domain potassium channel (TC 1.A.1.8) family. In terms of assembly, homodimer. Heterodimer. As to expression, brain and heart.

It is found in the cell membrane. The enzyme catalyses K(+)(in) = K(+)(out). Its activity is regulated as follows. The channel conductance is activated by arachidonic acid and inhibited by Ba(2+) ions, volatile anesthetics such as halothane and antiarrhythmic drug mexiletine. Insensitive to extracellular pH change. Functionally, k(+) channel that conducts outward rectifying tonic currents potentiated by purinergic signals. Homo- and heterodimerizes to form functional channels with distinct regulatory and gating properties. Contributes most of K(+) currents at the plasma membrane of resting microglia. Maintains a depolarized membrane potential required for proper ramified microglia morphology and phagocytosis, selectively mediating microglial pruning of presynaptic compartments at hippocampal excitatory synapses. Upon local release of ATP caused by neuronal injury or infection, it is potentiated by purinergic signaling and contributes to ATP-triggered K(+) efflux underlying microglial NLRP3 inflammasome assembly and IL1B release. This Danio rerio (Zebrafish) protein is Potassium channel, subfamily K, member 13.